The primary structure comprises 272 residues: Adenylate kinase (272 aa).

55–60 (GAGKGT) serves as a coordination point for ATP. Residues 75 to 104 (ATGDMLRSQVAKKTPLGKEAKKIMDQGGLV) form an NMP region. Residues T76, R81, 102-104 (GLV), 131-134 (GFPR), and Q138 contribute to the AMP site. The tract at residues 172–209 (GRLVHPASGRSYHKIFNPPKQDMKDDITGEPLIQRSDD) is LID. ATP contacts are provided by residues R173 and 182–183 (SY). 2 residues coordinate AMP: R206 and R217. Residue Q245 coordinates ATP.

The protein belongs to the adenylate kinase family. AK2 subfamily. Monomer.

The protein resides in the cytoplasm. The protein localises to the cytosol. Its subcellular location is the mitochondrion intermembrane space. It catalyses the reaction AMP + ATP = 2 ADP. Catalyzes the reversible transfer of the terminal phosphate group between ATP and AMP. Plays an important role in cellular energy homeostasis and in adenine nucleotide metabolism. Adenylate kinase activity is critical for regulation of the phosphate utilization and the AMP de novo biosynthesis pathways. In Talaromyces marneffei (Penicillium marneffei), this protein is Adenylate kinase (adk1).